We begin with the raw amino-acid sequence, 570 residues long: Proline--tRNA ligase (570 aa).

The protein belongs to the class-II aminoacyl-tRNA synthetase family. ProS type 1 subfamily. As to quaternary structure, homodimer.

The protein resides in the cytoplasm. The enzyme catalyses tRNA(Pro) + L-proline + ATP = L-prolyl-tRNA(Pro) + AMP + diphosphate. Functionally, catalyzes the attachment of proline to tRNA(Pro) in a two-step reaction: proline is first activated by ATP to form Pro-AMP and then transferred to the acceptor end of tRNA(Pro). As ProRS can inadvertently accommodate and process non-cognate amino acids such as alanine and cysteine, to avoid such errors it has two additional distinct editing activities against alanine. One activity is designated as 'pretransfer' editing and involves the tRNA(Pro)-independent hydrolysis of activated Ala-AMP. The other activity is designated 'posttransfer' editing and involves deacylation of mischarged Ala-tRNA(Pro). The misacylated Cys-tRNA(Pro) is not edited by ProRS. The sequence is that of Proline--tRNA ligase from Shewanella oneidensis (strain ATCC 700550 / JCM 31522 / CIP 106686 / LMG 19005 / NCIMB 14063 / MR-1).